We begin with the raw amino-acid sequence, 425 residues long: CAAX prenyl protease 1 homolog (425 aa).

5 helical membrane-spanning segments follow: residues 3–23, 62–80, 109–129, 155–175, and 188–208; these read LPYL…ETYL, FHFI…ILYY, LAFL…FSLY, GILL…IIVQ, and FMFA…APLF. His284 is a binding site for Zn(2+). Glu285 is a catalytic residue. A Zn(2+)-binding site is contributed by His288. 2 helical membrane passes run 295 to 315 and 332 to 352; these read VYSF…YTLV and VIIG…LLSF. Glu362 serves as a coordination point for Zn(2+). Residue Asp366 is the Proton donor of the active site.

It belongs to the peptidase M48A family. It depends on Zn(2+) as a cofactor.

Its subcellular location is the endoplasmic reticulum membrane. The catalysed reaction is Hydrolyzes the peptide bond -P2-(S-farnesyl or geranylgeranyl)C-P1'-P2'-P3'-COOH where P1' and P2' are amino acids with aliphatic side chains and P3' is any C-terminal residue.. Its function is as follows. Proteolytically removes the C-terminal three residues of farnesylated proteins. This is CAAX prenyl protease 1 homolog (FACE1) from Oryza sativa subsp. japonica (Rice).